The sequence spans 466 residues: Ribulose bisphosphate carboxylase large chain (466 aa).

K5 carries the N6,N6,N6-trimethyllysine modification. N114 and T164 together coordinate substrate. The Proton acceptor role is filled by K166. K168 contributes to the substrate binding site. Mg(2+) is bound by residues K192, D194, and E195. N6-carboxylysine is present on K192. H285 functions as the Proton acceptor in the catalytic mechanism. R286, H318, and S370 together coordinate substrate.

This sequence belongs to the RuBisCO large chain family. Type I subfamily. In terms of assembly, heterohexadecamer of 8 large chains and 8 small chains; disulfide-linked. The disulfide link is formed within the large subunit homodimers. The cofactor is Mg(2+). The disulfide bond which can form in the large chain dimeric partners within the hexadecamer appears to be associated with oxidative stress and protein turnover.

The protein localises to the plastid. The protein resides in the chloroplast. It catalyses the reaction 2 (2R)-3-phosphoglycerate + 2 H(+) = D-ribulose 1,5-bisphosphate + CO2 + H2O. The enzyme catalyses D-ribulose 1,5-bisphosphate + O2 = 2-phosphoglycolate + (2R)-3-phosphoglycerate + 2 H(+). Its function is as follows. RuBisCO catalyzes two reactions: the carboxylation of D-ribulose 1,5-bisphosphate, the primary event in carbon dioxide fixation, as well as the oxidative fragmentation of the pentose substrate in the photorespiration process. Both reactions occur simultaneously and in competition at the same active site. The protein is Ribulose bisphosphate carboxylase large chain of Caltha palustris (Yellow marsh marigold).